The chain runs to 586 residues: Pyruvate kinase (586 aa).

Position 32 (Arg-32) interacts with substrate. The K(+) site is built by Asn-34, Ser-36, Asp-66, and Thr-67. An ATP-binding site is contributed by 34–37 (NFSH). Residues Arg-73 and Lys-156 each contribute to the ATP site. Residue Glu-222 coordinates Mg(2+). Positions 245, 246, and 278 each coordinate substrate. Asp-246 is a Mg(2+) binding site.

The protein belongs to the pyruvate kinase family. This sequence in the C-terminal section; belongs to the PEP-utilizing enzyme family. As to quaternary structure, homotetramer. It depends on Mg(2+) as a cofactor. K(+) is required as a cofactor.

It carries out the reaction pyruvate + ATP = phosphoenolpyruvate + ADP + H(+). It functions in the pathway carbohydrate degradation; glycolysis; pyruvate from D-glyceraldehyde 3-phosphate: step 5/5. This Sporosarcina psychrophila (Bacillus psychrophilus) protein is Pyruvate kinase (pyk).